A 612-amino-acid chain; its full sequence is Glucoamylase (612 aa).

Residues 1–19 (MVSFSSCLRALALGSSVLA) form the signal peptide. Residues 20 to 25 (VQPVLR) constitute a propeptide that is removed on maturation. N-linked (GlcNAc...) asparagine glycosylation is present at asparagine 39. Substrate is bound at residue tryptophan 146. The Proton acceptor role is filled by aspartate 202. The active-site Proton donor is glutamate 205. Disulfide bonds link cysteine 236–cysteine 239, cysteine 248–cysteine 475, and cysteine 288–cysteine 296. The region spanning 506-612 (CQVPTTVSVT…KSAVQSDVWR (107 aa)) is the CBM20 domain.

The protein belongs to the glycosyl hydrolase 15 family.

It catalyses the reaction Hydrolysis of terminal (1-&gt;4)-linked alpha-D-glucose residues successively from non-reducing ends of the chains with release of beta-D-glucose.. The chain is Glucoamylase (glaA) from Aspergillus oryzae (strain ATCC 42149 / RIB 40) (Yellow koji mold).